We begin with the raw amino-acid sequence, 1220 residues long: MAAREQANSVRRSGFFNPFIGKRPFFRPGSGQTAETERPRPPQHSYCTEVGSFKFIAPRCLDEEAPADQRRGVHVGTLERPPKVYCDGSEYDVLNFASGGCWPRRIRVWNGQDFRGDGFNPRFERFHVYDIVETSESASHDDPSRFAELSRPSGSVVTLLGMSECGKRVAVHVYGVRHYFYMAKAEVDSACGITTEAELVRAMVDCAHSSALSAALGNGNGGKQSGGSGGGWWGGKHVSADCFKVETVCHTTLYYFGSKPALYYRVSASSSRLGGFICDNFHPEITKFEGSVDVTTRLLLDNENFTSFGWYRLRPGTHGERVQLRPVERHVTSSDVEINCTPDNLEPIPDEAAWPDYKLMCFDIECKAGTGNEMAFPVATNQEDLVIQISCLLYSLATQNHEHTLLFSLGSCDISEEYSFACVQRGEPRPTVLEFDSEYELLVAFLTFLKQYSPEFATGYNIVNFDWAYIVNKVTSVYNIKLDGYGKFNKGGLFKVWDIATNHFQKKSKVKINGLISLDMYSVATEKLKLPSYKLDAVVGDVLGEHKIDLPYKEIPSYYAGGPDRRGVIGEYCIQDSRLVGKLFFKYLPHLELSAVAKLARITLTRVIFDGQQIRVYTCLLKLARERNFILPDNRRRFDSQADAASETSELAMDSQSHAFDSTDEPDGVDGTPDAAGSGATSENGGGKPGVGRAVGYQGAKVLDPVSGFHVDPVVVFDFASLYPSIIQAHNLCFTTLALDEVDLAGLQPSVDYSTFEVGDQKLFFVHAHIRESLLGILLRDWLAMRKAVRARIPTSTPEEAVLLDKQQSAIKVICNSVYGFTGVANGLLPCLRIAATVTTIGRDMLLKTRDYVHSRWATRELLEDNFPGAIGFRNHKPYSVRVIYGDTDSVFIKFVGLTYEGVSELGDAMSRQISADLFRAPIKLECEKTFQRLLLITKKKYIGVINGGKMLMKGVDLVRKNNCSFINLYARHLVDLLLYDEDVATAAAEVTDVPPAEWVGRPLPSGFDKFGRVLVEAYNRITAPNLDVREFVMTAELSRSPESYTNKRLPHLTVYFKLAMRNEELPSVKERIPYVIVAQTEAAEREAGVVNSMRGTAQNPVVTKTARPQPKRKLLVSDLAEDPTYVSENDVPLNTDYYFSHLLGTISVTFKALFGNDVRTTENLLKRFIPETPHKTPTKTQALLERAGFEKLTPFTPEEESRRILHTVFCTLEAAPHQS.

Disordered regions lie at residues 21–43 (GKRP…RPPQ) and 641–691 (QADA…KPGV). Residues 646 to 660 (SETSELAMDSQSHAF) show a composition bias toward polar residues.

This sequence belongs to the DNA polymerase type-B family. Forms a complex with the ssDNA-binding protein, the DNA polymerase processivity factor, and the alkaline exonuclease. Interacts with the helicase-primase complex composed of the primase, the helicase and the primase-associated factor; this interaction may coordinate leading and lagging strand DNA synthesis at the replication fork.

Its subcellular location is the host nucleus. The catalysed reaction is DNA(n) + a 2'-deoxyribonucleoside 5'-triphosphate = DNA(n+1) + diphosphate. The enzyme catalyses Endonucleolytic cleavage to 5'-phosphomonoester.. Replicates viral genomic DNA. The replication complex is composed of six viral proteins: the DNA polymerase, processivity factor, primase, primase-associated factor, helicase, and ssDNA-binding protein. Additionally, the polymerase contains an intrinsic ribonuclease H (RNase H) activity that specifically degrades RNA/DNA heteroduplexes or duplex DNA substrates in the 5' to 3' direction. Therefore, it can catalyze the excision of the RNA primers that initiate the synthesis of Okazaki fragments at a replication fork during viral DNA replication. This is DNA polymerase catalytic subunit from Equine herpesvirus 1 (strain Ab4p) (EHV-1).